Reading from the N-terminus, the 559-residue chain is Actin-binding protein WASF1 (559 aa).

Disordered regions lie at residues 170–202 (EDKRKEKRKQKQKNLDRPHEPEKVPRAPHDRRR), 304–383 (IENR…GVLH), and 412–490 (VHPL…HPST). Residues 182–202 (KNLDRPHEPEKVPRAPHDRRR) show a composition bias toward basic and acidic residues. The segment covering 304 to 313 (IENRPQSPAT) has biased composition (polar residues). Residues 322-332 (PTPPPPPPPLP) show a composition bias toward pro residues. The span at 333–346 (SALSTSSLRASMTS) shows a compositional bias: low complexity. Arginine 341 bears the Asymmetric dimethylarginine; alternate mark. Omega-N-methylarginine; alternate is present on arginine 341. Pro residues-rich tracts occupy residues 347-360 (TPPPPVPPPPPPPA), 423-437 (LPPPPPPPPLPPPGI), and 460-477 (STAPGPHVPLMPPSPPSQ). Serine 489 is modified (phosphoserine). Residues 497–514 (ARSVLLEAIRKGIQLRKV) enclose the WH2 domain.

This sequence belongs to the SCAR/WAVE family. Component of the WAVE1 complex composed of ABI2, CYFIP1 or CYFIP2, BRK1, NCKAP1 and WASF1/WAVE1. Within the complex, a heterodimer containing NCKAP1 and CYFIP1 interacts with a heterotrimer formed by WAVE1, ABI2 and BRK1. CYFIP2 binds to activated RAC1 which causes the complex to dissociate, releasing activated WASF1. The complex can also be activated by NCK1. Binds actin and the Arp2/3 complex. Interacts with BAIAP2. Interacts with SHANK3; the interaction mediates the association of SHANK3 with the WAVE1 complex. Interacts with ABI1 (via N-terminus). Interacts with SORBS2; this interaction greatly enhances phosphorylation by ABL1 and dephosphorylation by PTPN12 and might mediate partial to focal adhesion sites.

The protein resides in the cytoplasm. Its subcellular location is the cytoskeleton. It localises to the synapse. It is found in the cell junction. The protein localises to the focal adhesion. Its function is as follows. Downstream effector molecule involved in the transmission of signals from tyrosine kinase receptors and small GTPases to the actin cytoskeleton. Promotes formation of actin filaments. Part of the WAVE complex that regulates lamellipodia formation. The WAVE complex regulates actin filament reorganization via its interaction with the Arp2/3 complex. As component of the WAVE1 complex, required for BDNF-NTRK2 endocytic trafficking and signaling from early endosomes. Also involved in the regulation of mitochondrial dynamics. The polypeptide is Actin-binding protein WASF1 (WASF1) (Pongo abelii (Sumatran orangutan)).